The sequence spans 71 residues: Small ribosomal subunit protein bS21 (71 aa).

The segment covering alanine 50–lysine 59 has biased composition (basic residues). A disordered region spans residues alanine 50–tyrosine 71. A compositionally biased stretch (basic and acidic residues) spans valine 60–tyrosine 71.

The protein belongs to the bacterial ribosomal protein bS21 family.

The chain is Small ribosomal subunit protein bS21 from Pseudomonas fluorescens (strain ATCC BAA-477 / NRRL B-23932 / Pf-5).